Reading from the N-terminus, the 87-residue chain is Tachykinin-1 (87 aa).

An N-terminal signal peptide occupies residues 1–22 (MIRVGLILCCIFIAGVFEASSA). Residues 23-37 (DDMLTAHNLIKRSEV) constitute a propeptide that is removed on maturation. A Methionine amide modification is found at Met49. The propeptide occupies 52–87 (SEELTRRLIQHPGSMSETSKRGPPKKVSRRPYILKK). The disordered stretch occupies residues 61 to 87 (QHPGSMSETSKRGPPKKVSRRPYILKK). Residues 73–87 (GPPKKVSRRPYILKK) are compositionally biased toward basic residues.

This sequence belongs to the tachykinin family. As to expression, expressed in the posterior salivary gland and more specifically in the mucus-secreting gland cells.

The protein resides in the secreted. Functionally, tachykinins are active peptides which excite neurons, evoke behavioral responses, are potent vasodilators and secretagogues, and contract (directly or indirectly) many smooth muscles. This is Tachykinin-1 from Octopus vulgaris (Common octopus).